A 175-amino-acid polypeptide reads, in one-letter code: Large ribosomal subunit protein uL10 (175 aa).

This sequence belongs to the universal ribosomal protein uL10 family. As to quaternary structure, part of the ribosomal stalk of the 50S ribosomal subunit. The N-terminus interacts with L11 and the large rRNA to form the base of the stalk. The C-terminus forms an elongated spine to which L12 dimers bind in a sequential fashion forming a multimeric L10(L12)X complex.

Its function is as follows. Forms part of the ribosomal stalk, playing a central role in the interaction of the ribosome with GTP-bound translation factors. The polypeptide is Large ribosomal subunit protein uL10 (Alkalilimnicola ehrlichii (strain ATCC BAA-1101 / DSM 17681 / MLHE-1)).